Reading from the N-terminus, the 35-residue chain is Thaumatin-like protein 6 (35 aa).

It belongs to the thaumatin family.

This Glebionis coronaria (Crown daisy) protein is Thaumatin-like protein 6.